The sequence spans 813 residues: Leucine--tRNA ligase (813 aa).

Positions 42–52 (PYTSGNLHIGH) match the 'HIGH' region motif. The 'KMSKS' region motif lies at 580–584 (KMSKS). Lysine 583 contacts ATP.

It belongs to the class-I aminoacyl-tRNA synthetase family.

It is found in the cytoplasm. The enzyme catalyses tRNA(Leu) + L-leucine + ATP = L-leucyl-tRNA(Leu) + AMP + diphosphate. The polypeptide is Leucine--tRNA ligase (Dehalococcoides mccartyi (strain ATCC BAA-2266 / KCTC 15142 / 195) (Dehalococcoides ethenogenes (strain 195))).